A 229-amino-acid polypeptide reads, in one-letter code: uncharacterized protein (229 aa).

A disordered region spans residues 1–41 (MRSAKVGVARQLETKKPQTGRKISTSSRGTIHSQQSQPEDI). The segment covering 21-39 (RKISTSSRGTIHSQQSQPE) has biased composition (polar residues). 4 EF-hand domains span residues 48-83 (KELK…IGLH), 84-119 (ANKA…SQNI), 123-158 (TNEE…FGDF), and 159-193 (DDEL…YLLN). Residues aspartate 61, aspartate 63, serine 65, glutamate 72, aspartate 97, aspartate 99, asparagine 101, glutamate 103, glutamate 108, aspartate 136, aspartate 138, asparagine 140, and glutamate 147 each coordinate Ca(2+). Residues 194–217 (DPKHDIDTGDSDVERYDDRHDDRA) are compositionally biased toward basic and acidic residues. Residues 194–229 (DPKHDIDTGDSDVERYDDRHDDRASPMPNHLSTVPE) form a disordered region.

This is an uncharacterized protein from Caenorhabditis elegans.